The following is a 101-amino-acid chain: Putative pterin-4-alpha-carbinolamine dehydratase (101 aa).

Belongs to the pterin-4-alpha-carbinolamine dehydratase family.

It carries out the reaction (4aS,6R)-4a-hydroxy-L-erythro-5,6,7,8-tetrahydrobiopterin = (6R)-L-erythro-6,7-dihydrobiopterin + H2O. The sequence is that of Putative pterin-4-alpha-carbinolamine dehydratase from Rhodopseudomonas palustris (strain BisA53).